The sequence spans 153 residues: Endoribonuclease YbeY (153 aa).

Zn(2+) contacts are provided by H116, H120, and H126.

It belongs to the endoribonuclease YbeY family. Zn(2+) serves as cofactor.

It is found in the cytoplasm. Functionally, single strand-specific metallo-endoribonuclease involved in late-stage 70S ribosome quality control and in maturation of the 3' terminus of the 16S rRNA. This chain is Endoribonuclease YbeY, found in Paraburkholderia phymatum (strain DSM 17167 / CIP 108236 / LMG 21445 / STM815) (Burkholderia phymatum).